Consider the following 419-residue polypeptide: Peptide chain release factor subunit 1 (419 aa).

This sequence belongs to the eukaryotic release factor 1 family. As to quaternary structure, heterodimer of two subunits, one of which binds GTP.

It localises to the cytoplasm. Functionally, directs the termination of nascent peptide synthesis (translation) in response to the termination codons UAA, UAG and UGA. This is Peptide chain release factor subunit 1 from Methanococcus maripaludis (strain C5 / ATCC BAA-1333).